Consider the following 861-residue polypeptide: DNA mismatch repair protein MutS (861 aa).

Glycine 618–serine 625 provides a ligand contact to ATP.

Belongs to the DNA mismatch repair MutS family.

Its function is as follows. This protein is involved in the repair of mismatches in DNA. It is possible that it carries out the mismatch recognition step. This protein has a weak ATPase activity. This chain is DNA mismatch repair protein MutS, found in Shewanella sp. (strain MR-7).